The chain runs to 101 residues: uncharacterized protein (101 aa).

It is found in the plastid. It localises to the chloroplast. This is an uncharacterized protein from Chlamydomonas reinhardtii (Chlamydomonas smithii).